Here is an 816-residue protein sequence, read N- to C-terminus: H(+)/Cl(-) exchange transporter 5 (816 aa).

The Cytoplasmic segment spans residues 1–124 (MAMWQGAMDN…WALIHSVSDA (124 aa)). The next 2 membrane-spanning stretches (helical) occupy residues 125–162 (FSGW…ICTG) and 208–231 (VNYF…VKAF). Positions 237–241 (GSGIP) match the Selectivity filter part_1 motif. Residue Ser238 coordinates chloride. The segment at residues 240 to 247 (IPEIKTIL) is an intramembrane region (helical). The next 2 membrane-spanning stretches (helical) occupy residues 256–275 (LGKW…VSSG) and 281–300 (EGPL…HCFN). A Selectivity filter part_2 motif is present at residues 279–283 (GKEGP). Intramembrane regions (helical) lie at residues 312–324 (VLSA…VSVA) and 328–336 (PIGGVLFSL). Helical transmembrane passes span 348-366 (LWRS…RSIN), 389-414 (LVPF…IAWC), 422-442 (LGKY…ILAF), 498-518 (MWQL…TFGM), and 523-542 (GLFI…LGVG). The Selectivity filter part_3 signature appears at 523-527 (GLFIP). Phe525 is a chloride binding site. The segment at residues 570-584 (GLYAMVGAAACLGGV) is an intramembrane region (helical). Positions 585 to 587 (TRM) form an intramembrane region, note=Loop between two helices. The segment at residues 588-599 (TVSLVVIMFELT) is an intramembrane region (helical). The note=Loop between two helices intramembrane region spans 600–604 (GGLEY). Residues 605–622 (IVPLMAAAMTSKWVADAL) form a helical membrane-spanning segment. Over 623-816 (GREGIYDAHI…NQDPDSILFN (194 aa)) the chain is Cytoplasmic. A chloride-binding site is contributed by Tyr628. 2 CBS domains span residues 656–720 (MKPR…ARKK) and 752–812 (ILDL…DPDS). ATP contacts are provided by residues Thr666, 687 to 689 (YSG), and 794 to 797 (TKKD).

This sequence belongs to the chloride channel (TC 2.A.49) family. ClC-5/CLCN5 subfamily. Interacts with NEDD4 and NEDD4L. Post-translationally, ubiquitinated by NEDD4L in the presence of albumin; which promotes endocytosis and proteasomal degradation. As to expression, kidney specific.

It is found in the golgi apparatus membrane. The protein resides in the endosome membrane. It localises to the cell membrane. The catalysed reaction is 2 chloride(in) + H(+)(out) = 2 chloride(out) + H(+)(in). Functionally, proton-coupled chloride transporter. Functions as antiport system and exchanges chloride ions against protons. Important for normal acidification of the endosome lumen. May play an important role in renal tubular function. The CLC channel family contains both chloride channels and proton-coupled anion transporters that exchange chloride or another anion for protons. The absence of conserved gating glutamate residues is typical for family members that function as channels. This chain is H(+)/Cl(-) exchange transporter 5 (Clcn5), found in Mus musculus (Mouse).